Reading from the N-terminus, the 226-residue chain is Large ribosomal subunit protein uL1 (226 aa).

This sequence belongs to the universal ribosomal protein uL1 family. Part of the 50S ribosomal subunit.

Functionally, binds directly to 23S rRNA. The L1 stalk is quite mobile in the ribosome, and is involved in E site tRNA release. Protein L1 is also a translational repressor protein, it controls the translation of the L11 operon by binding to its mRNA. The polypeptide is Large ribosomal subunit protein uL1 (Mycoplasma capricolum subsp. capricolum (strain California kid / ATCC 27343 / NCTC 10154)).